We begin with the raw amino-acid sequence, 968 residues long: Protein translocase subunit SecA (968 aa).

ATP contacts are provided by residues Gln-86, 104-108 (GEGKT), and Asp-494. The interval 835–968 (PAESAEESTD…RAAKAAKKRR (134 aa)) is disordered. Composition is skewed to low complexity over residues 883-892 (ARVATRPAAE) and 910-923 (SAPS…FSEG). Positions 956 to 968 (ARRRAAKAAKKRR) are enriched in basic residues.

This sequence belongs to the SecA family. Monomer and homodimer. Part of the essential Sec protein translocation apparatus which comprises SecA, SecYEG and auxiliary proteins SecDF. Other proteins may also be involved.

The protein localises to the cell membrane. It is found in the cytoplasm. It catalyses the reaction ATP + H2O + cellular proteinSide 1 = ADP + phosphate + cellular proteinSide 2.. Part of the Sec protein translocase complex. Interacts with the SecYEG preprotein conducting channel. Has a central role in coupling the hydrolysis of ATP to the transfer of proteins into and across the cell membrane, serving as an ATP-driven molecular motor driving the stepwise translocation of polypeptide chains across the membrane. In Beutenbergia cavernae (strain ATCC BAA-8 / DSM 12333 / CCUG 43141 / JCM 11478 / NBRC 16432 / NCIMB 13614 / HKI 0122), this protein is Protein translocase subunit SecA.